An 87-amino-acid chain; its full sequence is Class II metallothionein-like protein 1A (87 aa).

The protein belongs to the metallothionein superfamily. Type 15 family. As to expression, expressed in developing seeds.

In terms of biological role, metallothioneins have a high content of cysteine residues that bind various heavy metals. This is Class II metallothionein-like protein 1A (MT21A) from Oryza sativa subsp. japonica (Rice).